Here is a 46-residue protein sequence, read N- to C-terminus: uncharacterized protein (46 aa).

This is an uncharacterized protein from Escherichia coli (Bacteriophage T4).